Consider the following 276-residue polypeptide: RRP15-like protein (276 aa).

Disordered regions lie at residues 1 to 132 (MALL…QLRV) and 201 to 276 (KRAK…DGEE). 2 stretches are compositionally biased toward basic and acidic residues: residues 75–95 (FQKDAANKKPGFDFEIEKADV) and 226–245 (KGSSGKKKSEWSVLREDFMT). Acidic residues predominate over residues 254-276 (EEDDDEEGHNDEADDSDYDDGEE). Serine 269 carries the phosphoserine modification. A Phosphotyrosine modification is found at tyrosine 271.

This sequence belongs to the RRP15 family.

In Drosophila melanogaster (Fruit fly), this protein is RRP15-like protein.